The chain runs to 257 residues: Flagellar brake protein YcgR 2 (257 aa).

One can recognise a PilZ domain in the interval 131-244 (QRREFFRVQT…AERTLQRVVT (114 aa)).

The protein belongs to the YcgR family. In terms of assembly, monomer. Interacts with the flagellar basal bodies.

It localises to the bacterial flagellum basal body. Acts as a flagellar brake, regulating swimming and swarming in a bis-(3'-5') cyclic diguanylic acid (c-di-GMP)-dependent manner. Binds 1 c-di-GMP dimer per subunit. Increasing levels of c-di-GMP lead to decreased motility. This Paraburkholderia phytofirmans (strain DSM 17436 / LMG 22146 / PsJN) (Burkholderia phytofirmans) protein is Flagellar brake protein YcgR 2.